Here is a 63-residue protein sequence, read N- to C-terminus: Large ribosomal subunit protein bL28 (63 aa).

Belongs to the bacterial ribosomal protein bL28 family.

The polypeptide is Large ribosomal subunit protein bL28 (Alkaliphilus oremlandii (strain OhILAs) (Clostridium oremlandii (strain OhILAs))).